Reading from the N-terminus, the 427-residue chain is 3-phosphoshikimate 1-carboxyvinyltransferase (427 aa).

3 residues coordinate 3-phosphoshikimate: lysine 20, serine 21, and arginine 25. Phosphoenolpyruvate is bound at residue lysine 20. Glycine 92 and arginine 120 together coordinate phosphoenolpyruvate. 4 residues coordinate 3-phosphoshikimate: serine 166, glutamine 168, aspartate 312, and lysine 339. Glutamine 168 contributes to the phosphoenolpyruvate binding site. The active-site Proton acceptor is aspartate 312. Phosphoenolpyruvate is bound by residues arginine 343 and arginine 385.

Belongs to the EPSP synthase family. As to quaternary structure, monomer.

It localises to the cytoplasm. The enzyme catalyses 3-phosphoshikimate + phosphoenolpyruvate = 5-O-(1-carboxyvinyl)-3-phosphoshikimate + phosphate. It functions in the pathway metabolic intermediate biosynthesis; chorismate biosynthesis; chorismate from D-erythrose 4-phosphate and phosphoenolpyruvate: step 6/7. Catalyzes the transfer of the enolpyruvyl moiety of phosphoenolpyruvate (PEP) to the 5-hydroxyl of shikimate-3-phosphate (S3P) to produce enolpyruvyl shikimate-3-phosphate and inorganic phosphate. In Streptococcus sanguinis (strain SK36), this protein is 3-phosphoshikimate 1-carboxyvinyltransferase.